The primary structure comprises 327 residues: Deoxynucleotidyltransferase terminal-interacting protein 1 (327 aa).

A compositionally biased stretch (gly residues) spans 1–11 (MGATGDTGGPR). Disordered stretches follow at residues 1–34 (MGAT…PVLT) and 146–172 (KRGR…LPGH). The interval 55–146 (MTTSFTDPAI…RLAHELPGIK (92 aa)) is important for dimerization. Residues 146–161 (KRGRQAEEESHREAPF) are compositionally biased toward basic and acidic residues. The segment at residues 157–171 (REAPFPKRGKVGLPG) is a DNA-binding region (a.T hook). A Nuclear localization signal motif is present at residues 162–168 (PKRGKVG). The tract at residues 195–314 (REGPKWDPAR…MRKYMETLRT (120 aa)) is important for DNA and nucleosome binding. A DNA-binding region (H-T-H motif) is located at residues 214–235 (GSRANKALGMGGTRGRIYIKHP).

As to quaternary structure, monomer and homodimer. A minor proportion may form homotrimers. Interacts with ZNF541. Interacts with the terminal deoxynucleotidyltransferase DNTT. Interacts with TRERF1. Identified in a histone deacetylase complex that contains DNTTIP1, HDAC1 and MIDEAS; this complex assembles into a tetramer that contains four copies of each protein chain. Component of a histone deacetylase complex containing DNTTIP1, ZNF541, HDAC1 and HDAC2. Identified in a complex with KCTD19, HDAC1, HDAC2 and ZNF541. As to expression, expressed in thymus, bone marrow and spleen.

The protein resides in the nucleus. In terms of biological role, increases DNTT terminal deoxynucleotidyltransferase activity (in vitro). Also acts as a transcriptional regulator, binding to the consensus sequence 5'-GNTGCATG-3' following an AT-tract. Associates with RAB20 promoter and positively regulates its transcription. Binds DNA and nucleosomes; may recruit HDAC1 complexes to nucleosomes or naked DNA. This Rattus norvegicus (Rat) protein is Deoxynucleotidyltransferase terminal-interacting protein 1 (Dnttip1).